Here is a 198-residue protein sequence, read N- to C-terminus: ATP-dependent Clp protease proteolytic subunit (198 aa).

The active-site Nucleophile is Ser101. Residue His126 is part of the active site.

This sequence belongs to the peptidase S14 family. In terms of assembly, component of the chloroplastic Clp protease core complex.

The protein localises to the plastid. It localises to the chloroplast stroma. The enzyme catalyses Hydrolysis of proteins to small peptides in the presence of ATP and magnesium. alpha-casein is the usual test substrate. In the absence of ATP, only oligopeptides shorter than five residues are hydrolyzed (such as succinyl-Leu-Tyr-|-NHMec, and Leu-Tyr-Leu-|-Tyr-Trp, in which cleavage of the -Tyr-|-Leu- and -Tyr-|-Trp bonds also occurs).. Functionally, cleaves peptides in various proteins in a process that requires ATP hydrolysis. Has a chymotrypsin-like activity. Plays a major role in the degradation of misfolded proteins. The protein is ATP-dependent Clp protease proteolytic subunit of Psilotum nudum (Whisk fern).